The following is a 524-amino-acid chain: GMP synthase [glutamine-hydrolyzing] (524 aa).

The Glutamine amidotransferase type-1 domain occupies 8–206 (KILILDFGSQ…VRKLCQCEAR (199 aa)). The active-site Nucleophile is C85. Residues H180 and E182 contribute to the active site. A GMPS ATP-PPase domain is found at 207–399 (WTTGNIVEDA…LGLPYEMVYR (193 aa)). 234–240 (SGGVDSS) serves as a coordination point for ATP.

Homodimer.

The catalysed reaction is XMP + L-glutamine + ATP + H2O = GMP + L-glutamate + AMP + diphosphate + 2 H(+). Its pathway is purine metabolism; GMP biosynthesis; GMP from XMP (L-Gln route): step 1/1. In terms of biological role, catalyzes the synthesis of GMP from XMP. This Methylococcus capsulatus (strain ATCC 33009 / NCIMB 11132 / Bath) protein is GMP synthase [glutamine-hydrolyzing].